Reading from the N-terminus, the 343-residue chain is Mas-related G-protein coupled receptor member F (343 aa).

At 1 to 44 (MAGNCSWEAHPGNRNKMCPGLSEAPELYSRGFLTIEQIAMLPPP) the chain is on the extracellular side. A glycan (N-linked (GlcNAc...) asparagine) is linked at Asn-4. The helical transmembrane segment at 45–66 (AVMNYIFLLLCLCGLVGNGLVL) threads the bilayer. Residues 67–82 (WFFGFSIKRNPFSIYF) lie on the Cytoplasmic side of the membrane. The helical transmembrane segment at 83–104 (LHLASADVGYLFSKAVFSILNT) threads the bilayer. The Extracellular segment spans residues 105-123 (GGFLGTFADYIRSVCRVLG). Residues 124–144 (LCMFLTGVSLLPAVSAERCAS) form a helical membrane-spanning segment. The Cytoplasmic segment spans residues 145–160 (VIFPAWYWRRRPKRLS). Residues 161–181 (AVVCALLWVLSLLVTCLHNYF) form a helical membrane-spanning segment. Over 182–198 (CVFLGRGAPGAACRHMD) the chain is Extracellular. Residues 199 to 220 (IFLGILLFLLCCPLMVLPCLAL) traverse the membrane as a helical segment. Residues 221-241 (ILHVECRARRRQRSAKLNHVI) are Cytoplasmic-facing. The chain crosses the membrane as a helical span at residues 242 to 263 (LAMVSVFLVSSIYLGIDWFLFW). Over 264-273 (VFQIPAPFPE) the chain is Extracellular. A helical transmembrane segment spans residues 274–294 (YVTDLCICINSSAKPIVYFLA). Topologically, residues 295 to 343 (GRDKSQRLWEPLRVVFQRALRDGAELGEAGGSTPNTVTMEMQCPPGNAS) are cytoplasmic. The disordered stretch occupies residues 320 to 343 (LGEAGGSTPNTVTMEMQCPPGNAS).

This sequence belongs to the G-protein coupled receptor 1 family. Mas subfamily.

The protein localises to the cell membrane. In terms of biological role, orphan receptor. May bind to a neuropeptide and may regulate nociceptor function and/or development, including the sensation or modulation of pain. The chain is Mas-related G-protein coupled receptor member F (MRGPRF) from Homo sapiens (Human).